A 180-amino-acid chain; its full sequence is Chorion protein S19 (180 aa).

An N-terminal signal peptide occupies residues 1–21; it reads MNTFATLAVLFCACLIGNCHG.

Belongs to the chorion protein S19 family.

It is found in the secreted. Chorion membrane (egg shell) protein; plays a role in protecting the egg from the environment. This chain is Chorion protein S19 (Cp19), found in Drosophila subobscura (Fruit fly).